A 214-amino-acid chain; its full sequence is A-type ATP synthase subunit D (214 aa).

Belongs to the V-ATPase D subunit family. In terms of assembly, has multiple subunits with at least A(3), B(3), C, D, E, F, H, I and proteolipid K(x).

The protein resides in the cell membrane. In terms of biological role, component of the A-type ATP synthase that produces ATP from ADP in the presence of a proton gradient across the membrane. This Thermococcus gammatolerans (strain DSM 15229 / JCM 11827 / EJ3) protein is A-type ATP synthase subunit D.